Here is a 316-residue protein sequence, read N- to C-terminus: Lys-63-specific deubiquitinase BRCC36 (316 aa).

Position 2 is an N-acetylalanine (A2). Residues 12 to 179 (VHLESDAFLV…YTCFQSIQAQ (168 aa)) form the MPN domain. Residues H122, H124, and D135 each contribute to the Zn(2+) site. Positions 122-135 (HSHPHITVWPSHVD) match the JAMM motif motif. S258 carries the post-translational modification Phosphoserine.

This sequence belongs to the peptidase M67A family. BRCC36 subfamily. In terms of assembly, component of the ARISC complex, at least composed of UIMC1/RAP80, ABRAXAS1, BRCC3/BRCC36, BABAM2 and BABAM1/NBA1. Component of the BRCA1-A complex, at least composed of BRCA1, BARD1, UIMC1/RAP80, ABRAXAS1, BRCC3/BRCC36, BABAM2 and BABAM1/NBA1. In the BRCA1-A complex, interacts directly with ABRAXAS1 and BABAM2. Component of the BRISC complex, at least composed of ABRAXAS2, BRCC3/BRCC36, BABAM2 and BABAM1/NBA1. Identified in a complex with SHMT2 and the other subunits of the BRISC complex. In the BRISC complex, interacts directly with ABRAXAS2. Identified in a complex with ABRAXAS2 and NUMA1. The BRISC complex interacts with the CSN complex. Component of the BRCA1/BRCA2 containing complex (BRCC), which also contains BRCA1, BRCA2, BARD1, BABAM2 and RAD51. BRCC is a ubiquitin E3 ligase complex that enhances cellular survival following DNA damage. Interacts with BRCA1. Binds polyubiquitin. Interacts with PWWP2B. Interacts with HDAC1; this interaction is enhanced in the presence of PWWP2B. It depends on Zn(2+) as a cofactor.

It is found in the nucleus. The protein resides in the cytoplasm. The protein localises to the cytoskeleton. It localises to the spindle pole. In terms of biological role, metalloprotease that specifically cleaves 'Lys-63'-linked polyubiquitin chains. Does not have activity toward 'Lys-48'-linked polyubiquitin chains. Component of the BRCA1-A complex, a complex that specifically recognizes 'Lys-63'-linked ubiquitinated histones H2A and H2AX at DNA lesions sites, leading to target the BRCA1-BARD1 heterodimer to sites of DNA damage at double-strand breaks (DSBs). In the BRCA1-A complex, it specifically removes 'Lys-63'-linked ubiquitin on histones H2A and H2AX, antagonizing the RNF8-dependent ubiquitination at double-strand breaks (DSBs). Catalytic subunit of the BRISC complex, a multiprotein complex that specifically cleaves 'Lys-63'-linked ubiquitin in various substrates. Mediates the specific 'Lys-63'-specific deubiquitination associated with the COP9 signalosome complex (CSN), via the interaction of the BRISC complex with the CSN complex. The BRISC complex is required for normal mitotic spindle assembly and microtubule attachment to kinetochores via its role in deubiquitinating NUMA1. Plays a role in interferon signaling via its role in the deubiquitination of the interferon receptor IFNAR1; deubiquitination increases IFNAR1 activity by enhancing its stability and cell surface expression. Acts as a regulator of the NLRP3 inflammasome by mediating deubiquitination of NLRP3, leading to NLRP3 inflammasome assembly. Down-regulates the response to bacterial lipopolysaccharide (LPS) via its role in IFNAR1 deubiquitination. Deubiquitinates HDAC1 and PWWP2B leading to their stabilization. The sequence is that of Lys-63-specific deubiquitinase BRCC36 (BRCC3) from Bos taurus (Bovine).